The sequence spans 185 residues: Ribosome maturation factor RimM (185 aa).

The PRC barrel domain maps to Glu-106–Phe-185.

It belongs to the RimM family. Binds ribosomal protein uS19.

The protein resides in the cytoplasm. Functionally, an accessory protein needed during the final step in the assembly of 30S ribosomal subunit, possibly for assembly of the head region. Essential for efficient processing of 16S rRNA. May be needed both before and after RbfA during the maturation of 16S rRNA. It has affinity for free ribosomal 30S subunits but not for 70S ribosomes. The protein is Ribosome maturation factor RimM of Shigella dysenteriae serotype 1 (strain Sd197).